Here is a 208-residue protein sequence, read N- to C-terminus: 3-demethoxyubiquinol 3-hydroxylase (208 aa).

The Fe cation site is built by Glu57, Glu87, His90, Glu139, Glu171, and His174.

This sequence belongs to the COQ7 family. It depends on Fe cation as a cofactor.

The protein resides in the cell membrane. The catalysed reaction is a 5-methoxy-2-methyl-3-(all-trans-polyprenyl)benzene-1,4-diol + AH2 + O2 = a 3-demethylubiquinol + A + H2O. Its pathway is cofactor biosynthesis; ubiquinone biosynthesis. Functionally, catalyzes the hydroxylation of 2-nonaprenyl-3-methyl-6-methoxy-1,4-benzoquinol during ubiquinone biosynthesis. In Nitrosomonas europaea (strain ATCC 19718 / CIP 103999 / KCTC 2705 / NBRC 14298), this protein is 3-demethoxyubiquinol 3-hydroxylase.